The sequence spans 112 residues: Ribonuclease P protein component (112 aa).

The protein belongs to the RnpA family. Consists of a catalytic RNA component (M1 or rnpB) and a protein subunit.

It carries out the reaction Endonucleolytic cleavage of RNA, removing 5'-extranucleotides from tRNA precursor.. RNaseP catalyzes the removal of the 5'-leader sequence from pre-tRNA to produce the mature 5'-terminus. It can also cleave other RNA substrates such as 4.5S RNA. The protein component plays an auxiliary but essential role in vivo by binding to the 5'-leader sequence and broadening the substrate specificity of the ribozyme. This chain is Ribonuclease P protein component, found in Mesomycoplasma hyopneumoniae (strain 7448) (Mycoplasma hyopneumoniae).